A 306-amino-acid polypeptide reads, in one-letter code: D-alanine--D-alanine ligase (306 aa).

The region spanning 101–303 (KLLWQGAGLP…FSQLVVRILE (203 aa)) is the ATP-grasp domain. 134-189 (ISALGLPLIVKPSREGSSVGMTKVVEENALQGALSLAFQHDDEILIEKWLCGPEFT) serves as a coordination point for ATP. D257, E270, and N272 together coordinate Mg(2+).

This sequence belongs to the D-alanine--D-alanine ligase family. Requires Mg(2+) as cofactor. Mn(2+) serves as cofactor.

It localises to the cytoplasm. It carries out the reaction 2 D-alanine + ATP = D-alanyl-D-alanine + ADP + phosphate + H(+). It participates in cell wall biogenesis; peptidoglycan biosynthesis. In terms of biological role, cell wall formation. In Salmonella paratyphi A (strain ATCC 9150 / SARB42), this protein is D-alanine--D-alanine ligase.